Reading from the N-terminus, the 310-residue chain is Protein-L-isoaspartate O-methyltransferase (310 aa).

The tract at residues 1-41 is disordered; the sequence is MSGERAKRFPLALEDLKRAPRKSEGRPGERQTAGAVPKAAD. The segment covering 14-29 has biased composition (basic and acidic residues); that stretch reads EDLKRAPRKSEGRPGE. Ser157 is an active-site residue.

Belongs to the methyltransferase superfamily. L-isoaspartyl/D-aspartyl protein methyltransferase family.

The protein localises to the cytoplasm. It catalyses the reaction [protein]-L-isoaspartate + S-adenosyl-L-methionine = [protein]-L-isoaspartate alpha-methyl ester + S-adenosyl-L-homocysteine. Catalyzes the methyl esterification of L-isoaspartyl residues in peptides and proteins that result from spontaneous decomposition of normal L-aspartyl and L-asparaginyl residues. It plays a role in the repair and/or degradation of damaged proteins. This chain is Protein-L-isoaspartate O-methyltransferase, found in Burkholderia cenocepacia (strain HI2424).